A 243-amino-acid polypeptide reads, in one-letter code: Adenosine 5'-phosphosulfate reductase (243 aa).

[4Fe-4S] cluster is bound by residues C126, C127, C209, and C212. Residue C235 is the Nucleophile; cysteine thiosulfonate intermediate of the active site.

The protein belongs to the PAPS reductase family. CysH subfamily. The cofactor is [4Fe-4S] cluster.

The protein localises to the cytoplasm. The catalysed reaction is [thioredoxin]-disulfide + sulfite + AMP + 2 H(+) = adenosine 5'-phosphosulfate + [thioredoxin]-dithiol. The protein operates within sulfur metabolism; hydrogen sulfide biosynthesis; sulfite from sulfate. Functionally, catalyzes the formation of sulfite from adenosine 5'-phosphosulfate (APS) using thioredoxin as an electron donor. This Staphylococcus epidermidis (strain ATCC 35984 / DSM 28319 / BCRC 17069 / CCUG 31568 / BM 3577 / RP62A) protein is Adenosine 5'-phosphosulfate reductase.